We begin with the raw amino-acid sequence, 336 residues long: MNAPEILNGAATASPADATEATQTAARAKTPLTRREQKEAYENNKLFKRLARQVGEAIVDFNMIENGDKVMVCLSGGKDSYAMLEILMRLRERAPINFDIVAVNLDQKQPGFPEHVLPEYLKQLDIPFHIENQDTYSIVKRLVPEGKTTCSLCSRLRRGILYRVAGELGATKIALGHHRDDILQTLLLNMFYGGKLKGMPPKLQSDDGKNIVIRPLAYVKETDLEKYAELREFPIIPCNLCGSQPNLKRAEMKALVRDWEKRFPGRIENMFNALSNVVPSHLMDHKLFPFAGLRATGEADPQGDIAFDEEPCSTDAAEGAMPGATKSISIVQFDDL.

The tract at residues Met1–Arg34 is disordered. Over residues Ala10 to Thr22 the composition is skewed to low complexity. Residues Ser75–Ser80 carry the PP-loop motif motif. 3 residues coordinate [4Fe-4S] cluster: Cys150, Cys153, and Cys241.

The protein belongs to the TtcA family. As to quaternary structure, homodimer. Mg(2+) serves as cofactor. Requires [4Fe-4S] cluster as cofactor.

The protein resides in the cytoplasm. It carries out the reaction cytidine(32) in tRNA + S-sulfanyl-L-cysteinyl-[cysteine desulfurase] + AH2 + ATP = 2-thiocytidine(32) in tRNA + L-cysteinyl-[cysteine desulfurase] + A + AMP + diphosphate + H(+). Its pathway is tRNA modification. Functionally, catalyzes the ATP-dependent 2-thiolation of cytidine in position 32 of tRNA, to form 2-thiocytidine (s(2)C32). The sulfur atoms are provided by the cysteine/cysteine desulfurase (IscS) system. The sequence is that of tRNA-cytidine(32) 2-sulfurtransferase from Paraburkholderia phytofirmans (strain DSM 17436 / LMG 22146 / PsJN) (Burkholderia phytofirmans).